Reading from the N-terminus, the 509-residue chain is Maturase K (509 aa).

It belongs to the intron maturase 2 family. MatK subfamily.

The protein localises to the plastid. Its subcellular location is the chloroplast. In terms of biological role, usually encoded in the trnK tRNA gene intron. Probably assists in splicing its own and other chloroplast group II introns. In Solanum tuberosum (Potato), this protein is Maturase K.